We begin with the raw amino-acid sequence, 271 residues long: Orotidine 5'-phosphate decarboxylase (271 aa).

Catalysis depends on K95, which acts as the Proton donor.

Belongs to the OMP decarboxylase family. Type 2 subfamily.

The catalysed reaction is orotidine 5'-phosphate + H(+) = UMP + CO2. Its pathway is pyrimidine metabolism; UMP biosynthesis via de novo pathway; UMP from orotate: step 2/2. The polypeptide is Orotidine 5'-phosphate decarboxylase (Aromatoleum aromaticum (strain DSM 19018 / LMG 30748 / EbN1) (Azoarcus sp. (strain EbN1))).